A 302-amino-acid polypeptide reads, in one-letter code: Sulfate adenylyltransferase subunit 2 (302 aa).

It belongs to the PAPS reductase family. CysD subfamily. In terms of assembly, heterodimer composed of CysD, the smaller subunit, and CysN.

The enzyme catalyses sulfate + ATP + H(+) = adenosine 5'-phosphosulfate + diphosphate. The protein operates within sulfur metabolism; hydrogen sulfide biosynthesis; sulfite from sulfate: step 1/3. With CysN forms the ATP sulfurylase (ATPS) that catalyzes the adenylation of sulfate producing adenosine 5'-phosphosulfate (APS) and diphosphate, the first enzymatic step in sulfur assimilation pathway. APS synthesis involves the formation of a high-energy phosphoric-sulfuric acid anhydride bond driven by GTP hydrolysis by CysN coupled to ATP hydrolysis by CysD. The chain is Sulfate adenylyltransferase subunit 2 from Salmonella agona (strain SL483).